We begin with the raw amino-acid sequence, 573 residues long: Lauric acid 10-hydroxylase (573 aa).

The next 2 helical transmembrane spans lie at 3–23 and 298–318; these read YVNI…LMSL and LFPT…LLIF. Cysteine 516 provides a ligand contact to heme.

It belongs to the cytochrome P450 family. Heme serves as cofactor. As to expression, mostly expressed in flowers and leaves and, at low levels, in roots and stems.

The protein localises to the endoplasmic reticulum membrane. It catalyses the reaction an omega-methyl-medium-chain fatty acid + reduced [NADPH--hemoprotein reductase] + O2 = an omega-hydroxy-medium-chain fatty acid + oxidized [NADPH--hemoprotein reductase] + H2O + H(+). The enzyme catalyses decanoate + reduced [NADPH--hemoprotein reductase] + O2 = 10-hydroxydecanoate + oxidized [NADPH--hemoprotein reductase] + H2O + H(+). It carries out the reaction dodecanoate + reduced [NADPH--hemoprotein reductase] + O2 = 12-hydroxydodecanoate + oxidized [NADPH--hemoprotein reductase] + H2O + H(+). Its pathway is lipid metabolism; fatty acid metabolism. Cytochrome P450 hydroxylase catalyzing the conversion of decanoate (capric acid) and dodecanoate (lauric acid) to their corresponding omega-hydroxy metabolites, 10-hydroxydecanoate and 12-hydroxydodecanoate, respectively; these hydroxylated components affect plant growth, including reducing root elongation. The chain is Lauric acid 10-hydroxylase from Petunia hybrida (Petunia).